We begin with the raw amino-acid sequence, 126 residues long: MPKEIILPEGTPPPLAPYVPATKADNIVYVSGILPLDENNDVVHVGDAAAQTRHVLETIKHILSNAGGSLKDVTFNHIFLRDWADYPAINQVYAEYFPEERPARYCVQVGLVKPDALIEIASVAHV.

The protein belongs to the RutC family.

The enzyme catalyses (Z)-3-aminoacrylate + H2O + H(+) = 3-oxopropanoate + NH4(+). In terms of biological role, involved in pyrimidine catabolism. Catalyzes the deamination of 3-aminoacrylate to malonic semialdehyde, a reaction that can also occur spontaneously. RutC may facilitate the reaction and modulate the metabolic fitness, rather than catalyzing essential functions. The chain is 3-aminoacrylate deaminase RutC from Acinetobacter baylyi (strain ATCC 33305 / BD413 / ADP1).